A 151-amino-acid chain; its full sequence is Ribonuclease H (151 aa).

Positions 1 to 143 (MSDVVVIHTD…ADVLATRGLQ (143 aa)) constitute an RNase H type-1 domain. Mg(2+) contacts are provided by Asp-10, Glu-49, Asp-71, and Asp-135.

This sequence belongs to the RNase H family. In terms of assembly, monomer. Requires Mg(2+) as cofactor.

The protein localises to the cytoplasm. The catalysed reaction is Endonucleolytic cleavage to 5'-phosphomonoester.. Functionally, endonuclease that specifically degrades the RNA of RNA-DNA hybrids. The polypeptide is Ribonuclease H (Mycolicibacterium gilvum (strain PYR-GCK) (Mycobacterium gilvum (strain PYR-GCK))).